The primary structure comprises 350 residues: MFNIASAPFAHNRKQTQTLMLLVILACLPGLLAQTWFFGWGSFIQILLALVTALGAEALVLRLRRRPIKPALMDGSAALTAVLIGLSLPPLLPWWMLVLGTAFAIIIAKHLYGGLGQNLFNPAMVAYVLLLVSFPVQMTSWLPPDTIRAYDIGFGDAASVIFTGFSLDGYSMAQLKQGVDGLTMATPLDTLKTGLNQGLTTGEVMSHAVFEGWGGIGWSWVNLGYLLGGLFLLQQKVINWRIPGAILGSLLLAATLGYLMTPDATATPMFHLFSGATMLGAFFIATDPVSASTTPRGRLVYGVLIGVLVYLIRRFGGYPDAFAFAVLLANLCVPLIDSLTRPKVYGARRK.

Helical transmembrane passes span 15–35, 36–56, 67–87, 88–108, and 122–142; these read QTQT…LAQT, WFFG…ALGA, PIKP…IGLS, LPPL…IIIA, and PAMV…TSWL. At T186 the chain carries FMN phosphoryl threonine. 4 helical membrane-spanning segments follow: residues 213–233, 242–262, 264–284, and 299–316; these read WGGI…LFLL, IPGA…LMTP, ATAT…AFFI, and LVYG…RRFG.

Belongs to the NqrB/RnfD family. The complex is composed of six subunits: RnfA, RnfB, RnfC, RnfD, RnfE and RnfG. FMN serves as cofactor.

Its subcellular location is the cell inner membrane. In terms of biological role, part of a membrane-bound complex that couples electron transfer with translocation of ions across the membrane. The protein is Ion-translocating oxidoreductase complex subunit D of Aeromonas salmonicida (strain A449).